Consider the following 114-residue polypeptide: uncharacterized protein (114 aa).

The tract at residues 1–114 is disordered; that stretch reads MSTAASSRMR…HASQSPDTAY (114 aa). Residues 32–43 are compositionally biased toward low complexity; that stretch reads CRRVPSRPCRPV.

This is an uncharacterized protein from Human adenovirus B serotype 7 (HAdV-7).